A 555-amino-acid chain; its full sequence is Serine/threonine-protein kinase AGC1-7 (555 aa).

Residues 1 to 126 (MLTKPGKKLD…PSKPHTGGDI (126 aa)) form a disordered region. 2 stretches are compositionally biased toward basic and acidic residues: residues 7–16 (KKLDSSESTH) and 35–54 (PRKE…DNLI). Positions 84-118 (SQSNLNTKPNNNNSNNNSNMSSRSNSIESTSSNPS) are enriched in low complexity. The region spanning 146 to 480 (FRLLKRLGYG…ATEIKQHPFF (335 aa)) is the Protein kinase domain. ATP contacts are provided by residues 152–160 (LGYGDIGSV) and Lys175. Catalysis depends on Asp271, which acts as the Proton acceptor. The 75-residue stretch at 481-555 (EGVNWALIRS…DPDYIDFEYF (75 aa)) folds into the AGC-kinase C-terminal domain. Residues 514–547 (AAVDGGGKKNNNGAGGGCSTGGGDNKPNGDCNDP) are disordered. The segment covering 526–537 (GAGGGCSTGGGD) has biased composition (gly residues).

This sequence belongs to the protein kinase superfamily. AGC Ser/Thr protein kinase family. As to quaternary structure, interacts with PDPK1/PDK1. In terms of processing, autophosphorylated and phosphorylated by PDPK1/PDK1. As to expression, specifically expressed in pollen grains.

The protein localises to the cytoplasm. It carries out the reaction L-seryl-[protein] + ATP = O-phospho-L-seryl-[protein] + ADP + H(+). It catalyses the reaction L-threonyl-[protein] + ATP = O-phospho-L-threonyl-[protein] + ADP + H(+). Activated by PDPK1/PDK1. Functionally, functions redudantly with AGC1-5 as signaling component in the pollen tube. Required for polarized growth of pollen tubes. This chain is Serine/threonine-protein kinase AGC1-7, found in Arabidopsis thaliana (Mouse-ear cress).